Reading from the N-terminus, the 357-residue chain is DNA replication and repair protein RecF (357 aa).

30–37 lines the ATP pocket; it reads GANGSGKT.

The protein belongs to the RecF family.

Its subcellular location is the cytoplasm. In terms of biological role, the RecF protein is involved in DNA metabolism; it is required for DNA replication and normal SOS inducibility. RecF binds preferentially to single-stranded, linear DNA. It also seems to bind ATP. This chain is DNA replication and repair protein RecF, found in Shigella flexneri serotype 5b (strain 8401).